The following is a 231-amino-acid chain: Sensory transduction protein BceR (231 aa).

Positions 3-116 (KIMLIEDDHT…VLVAKIQAIL (114 aa)) constitute a Response regulatory domain. Position 52 is a 4-aspartylphosphate (Asp-52). The segment at residues 127 to 225 (TQLKTWCGAT…KVGQGYMAKE (99 aa)) is a DNA-binding region (ompR/PhoB-type).

Phosphorylated by BceS.

The protein resides in the cytoplasm. In terms of biological role, member of the two-component regulatory system BceS/BceR involved in the regulation of bacitracin resistance. When activated by BceS, binds to the upstream region of the bceAB promoter and up-regulates the expression of these two genes. This chain is Sensory transduction protein BceR (bceR), found in Halalkalibacterium halodurans (strain ATCC BAA-125 / DSM 18197 / FERM 7344 / JCM 9153 / C-125) (Bacillus halodurans).